Reading from the N-terminus, the 299-residue chain is GTPase Era (299 aa).

Residues 9–177 (RSGSVAVIGR…VGDLLKLVPE (169 aa)) enclose the Era-type G domain. Residues 17-24 (GRPNVGKS) are G1. 17–24 (GRPNVGKS) provides a ligand contact to GTP. Residues 43–47 (QTTRH) form a G2 region. The segment at 64–67 (DTPG) is G3. Residues 64–68 (DTPGL) and 126–129 (NKVD) each bind GTP. The tract at residues 126-129 (NKVD) is G4. Positions 156–158 (VSA) are G5. The KH type-2 domain maps to 200 to 284 (VREQLMRQLG…FLETWVRVRE (85 aa)).

Belongs to the TRAFAC class TrmE-Era-EngA-EngB-Septin-like GTPase superfamily. Era GTPase family. Monomer.

It is found in the cytoplasm. The protein localises to the cell inner membrane. Functionally, an essential GTPase that binds both GDP and GTP, with rapid nucleotide exchange. Plays a role in 16S rRNA processing and 30S ribosomal subunit biogenesis and possibly also in cell cycle regulation and energy metabolism. This Xanthomonas oryzae pv. oryzae (strain MAFF 311018) protein is GTPase Era.